The following is a 278-amino-acid chain: 4-deoxy-L-threo-5-hexosulose-uronate ketol-isomerase (278 aa).

Zn(2+) is bound by residues His196, His198, Glu203, and His245.

This sequence belongs to the KduI family. Zn(2+) serves as cofactor.

It carries out the reaction 5-dehydro-4-deoxy-D-glucuronate = 3-deoxy-D-glycero-2,5-hexodiulosonate. The protein operates within glycan metabolism; pectin degradation; 2-dehydro-3-deoxy-D-gluconate from pectin: step 4/5. Catalyzes the isomerization of 5-dehydro-4-deoxy-D-glucuronate to 3-deoxy-D-glycero-2,5-hexodiulosonate. The protein is 4-deoxy-L-threo-5-hexosulose-uronate ketol-isomerase of Yersinia enterocolitica serotype O:8 / biotype 1B (strain NCTC 13174 / 8081).